The sequence spans 248 residues: 4-hydroxy-tetrahydrodipicolinate reductase (248 aa).

NAD(+) is bound by residues 74-76 (GTT) and 99-102 (SANF). Catalysis depends on H134, which acts as the Proton donor/acceptor. (S)-2,3,4,5-tetrahydrodipicolinate is bound at residue H135. K138 serves as the catalytic Proton donor. Residue 144-145 (GT) coordinates (S)-2,3,4,5-tetrahydrodipicolinate.

Belongs to the DapB family.

The protein resides in the cytoplasm. It carries out the reaction (S)-2,3,4,5-tetrahydrodipicolinate + NAD(+) + H2O = (2S,4S)-4-hydroxy-2,3,4,5-tetrahydrodipicolinate + NADH + H(+). The catalysed reaction is (S)-2,3,4,5-tetrahydrodipicolinate + NADP(+) + H2O = (2S,4S)-4-hydroxy-2,3,4,5-tetrahydrodipicolinate + NADPH + H(+). Its pathway is amino-acid biosynthesis; L-lysine biosynthesis via DAP pathway; (S)-tetrahydrodipicolinate from L-aspartate: step 4/4. Its function is as follows. Catalyzes the conversion of 4-hydroxy-tetrahydrodipicolinate (HTPA) to tetrahydrodipicolinate. In Chlorobium phaeobacteroides (strain BS1), this protein is 4-hydroxy-tetrahydrodipicolinate reductase.